We begin with the raw amino-acid sequence, 217 residues long: Adenylate kinase (217 aa).

10–15 serves as a coordination point for ATP; that stretch reads GAGKGT. The tract at residues 30–59 is NMP; sequence STGDMFRAAMKEETQLGLEAKSFIDKGELV. AMP contacts are provided by residues Thr-31, Arg-36, 57–59, 85–88, and Gln-92; these read ELV and GFPR. The tract at residues 126 to 163 is LID; sequence GRRICKNCGATYHLVFNPPAKENVCDKCGGELYQRADD. Arg-127 serves as a coordination point for ATP. Residues Cys-130 and Cys-133 each coordinate Zn(2+). Residue 136 to 137 participates in ATP binding; that stretch reads TY. The Zn(2+) site is built by Cys-150 and Cys-153. AMP contacts are provided by Arg-160 and Arg-171. ATP is bound at residue Lys-199.

Belongs to the adenylate kinase family. Monomer.

Its subcellular location is the cytoplasm. The enzyme catalyses AMP + ATP = 2 ADP. It functions in the pathway purine metabolism; AMP biosynthesis via salvage pathway; AMP from ADP: step 1/1. Its function is as follows. Catalyzes the reversible transfer of the terminal phosphate group between ATP and AMP. Plays an important role in cellular energy homeostasis and in adenine nucleotide metabolism. The protein is Adenylate kinase of Bacillus pumilus (strain SAFR-032).